The sequence spans 204 residues: Holliday junction branch migration complex subunit RuvA (204 aa).

Positions M1–M64 are domain I. Residues T65–A143 are domain II. The segment at L144–G151 is flexible linker. A domain III region spans residues V152–R204.

It belongs to the RuvA family. As to quaternary structure, homotetramer. Forms an RuvA(8)-RuvB(12)-Holliday junction (HJ) complex. HJ DNA is sandwiched between 2 RuvA tetramers; dsDNA enters through RuvA and exits via RuvB. An RuvB hexamer assembles on each DNA strand where it exits the tetramer. Each RuvB hexamer is contacted by two RuvA subunits (via domain III) on 2 adjacent RuvB subunits; this complex drives branch migration. In the full resolvosome a probable DNA-RuvA(4)-RuvB(12)-RuvC(2) complex forms which resolves the HJ.

The protein localises to the cytoplasm. Functionally, the RuvA-RuvB-RuvC complex processes Holliday junction (HJ) DNA during genetic recombination and DNA repair, while the RuvA-RuvB complex plays an important role in the rescue of blocked DNA replication forks via replication fork reversal (RFR). RuvA specifically binds to HJ cruciform DNA, conferring on it an open structure. The RuvB hexamer acts as an ATP-dependent pump, pulling dsDNA into and through the RuvAB complex. HJ branch migration allows RuvC to scan DNA until it finds its consensus sequence, where it cleaves and resolves the cruciform DNA. The chain is Holliday junction branch migration complex subunit RuvA from Rhizobium etli (strain CIAT 652).